Consider the following 189-residue polypeptide: Stathmin-4 (189 aa).

2 S-palmitoyl cysteine lipidation sites follow: Cys20 and Cys22. The region spanning 48–189 (SDMEVIELNK…NKELKEEASR (142 aa)) is the SLD domain. Position 90 is a phosphoserine (Ser90). Residues 90–188 (SLEEIQKKLE…KNKELKEEAS (99 aa)) adopt a coiled-coil conformation. The segment at 168–189 (QEKDKHAEEVRKNKELKEEASR) is disordered.

Belongs to the stathmin family.

Its subcellular location is the golgi apparatus. The protein localises to the cell projection. The protein resides in the growth cone. It is found in the axon. In terms of biological role, exhibits microtubule-destabilizing activity. The protein is Stathmin-4 (STMN4) of Homo sapiens (Human).